The primary structure comprises 425 residues: Type I restriction enzyme MjaVII specificity subunit (425 aa).

The interval Lys-9 to Leu-168 is target recognition domain 1. A central conserved region (CCR) region spans residues Glu-169–Thr-208. Residues Glu-169 to Thr-208 adopt a coiled-coil conformation. The tract at residues Lys-209–Leu-368 is target recognition domain 2. The stretch at Glu-369–Thr-418 forms a coiled coil. The distal conserved region (DCR) stretch occupies residues Glu-369–Thr-418.

This sequence belongs to the type-I restriction system S methylase family. In terms of assembly, the type I restriction/modification system is composed of three polypeptides R, M and S.

In terms of biological role, the specificity (S) subunit of a type I restriction enzyme; this subunit dictates DNA sequence specificity. The M and S subunits together form a methyltransferase (MTase) that methylates A-3 on the top and bottom strands of the sequence 5'-CAAN(7)TGG-3'. In the presence of the R subunit the complex can also act as an endonuclease, binding to the same target sequence but cutting the DNA some distance from this site. Whether the DNA is cut or modified depends on the methylation state of the target sequence. When the target site is unmodified, the DNA is cut. When the target site is hemimethylated, the complex acts as a maintenance MTase modifying the DNA so that both strands become methylated. After locating a non-methylated recognition site, the enzyme complex serves as a molecular motor that translocates DNA in an ATP-dependent manner until a collision occurs that triggers cleavage. The polypeptide is Type I restriction enzyme MjaVII specificity subunit (Methanocaldococcus jannaschii (strain ATCC 43067 / DSM 2661 / JAL-1 / JCM 10045 / NBRC 100440) (Methanococcus jannaschii)).